A 469-amino-acid polypeptide reads, in one-letter code: Glutamate-1-semialdehyde 2,1-aminomutase, chloroplastic (469 aa).

The transit peptide at 1-34 (MAGAAAAVASGISIRPVAAPKISRAPRSRSVVRA) directs the protein to the chloroplast. The residue at position 309 (Lys309) is an N6-(pyridoxal phosphate)lysine.

It belongs to the class-III pyridoxal-phosphate-dependent aminotransferase family. HemL subfamily. Homodimer. Pyridoxal 5'-phosphate serves as cofactor.

The protein resides in the plastid. It is found in the chloroplast. The catalysed reaction is (S)-4-amino-5-oxopentanoate = 5-aminolevulinate. It functions in the pathway porphyrin-containing compound metabolism; protoporphyrin-IX biosynthesis; 5-aminolevulinate from L-glutamyl-tRNA(Glu): step 2/2. Its pathway is porphyrin-containing compound metabolism; chlorophyll biosynthesis. This Hordeum vulgare (Barley) protein is Glutamate-1-semialdehyde 2,1-aminomutase, chloroplastic (GSA).